The chain runs to 598 residues: Arginine--tRNA ligase (598 aa).

The 'HIGH' region motif lies at A139–H149.

The protein belongs to the class-I aminoacyl-tRNA synthetase family. Monomer.

It is found in the cytoplasm. It catalyses the reaction tRNA(Arg) + L-arginine + ATP = L-arginyl-tRNA(Arg) + AMP + diphosphate. The protein is Arginine--tRNA ligase of Bradyrhizobium sp. (strain BTAi1 / ATCC BAA-1182).